The sequence spans 260 residues: MSTFKRELELFLLALTFFTRIPVPVKLDYSGEGLNRASRYFGLVGTLVGLIAALVFYLTQFIFPASVAVVLAMIATVLLTGGFHEDGLADTADGFGGAFERERKLEIMKDSRVGSYGSLALMLALLLKFQLLSELALYSVSSVAGGLVLGHTLSRAFAASIIFNHTYVREDAESKAKPLAQSMHWDEVLFLVLSAGVICLLLTGVGATLVILVTLFVARSLLARWQSRHIGGYTGDTLGACQQILELVVYLVLLLLWSQS.

The next 6 helical transmembrane spans lie at 43 to 63 (LVGT…QFIF), 64 to 84 (PASV…GGFH), 117 to 137 (GSLA…ELAL), 143 to 163 (VAGG…SIIF), 197 to 217 (VICL…TLFV), and 237 to 257 (TLGA…LLLW).

It belongs to the CobS family. It depends on Mg(2+) as a cofactor.

It is found in the cell inner membrane. It catalyses the reaction alpha-ribazole + adenosylcob(III)inamide-GDP = adenosylcob(III)alamin + GMP + H(+). The catalysed reaction is alpha-ribazole 5'-phosphate + adenosylcob(III)inamide-GDP = adenosylcob(III)alamin 5'-phosphate + GMP + H(+). It functions in the pathway cofactor biosynthesis; adenosylcobalamin biosynthesis; adenosylcobalamin from cob(II)yrinate a,c-diamide: step 7/7. Joins adenosylcobinamide-GDP and alpha-ribazole to generate adenosylcobalamin (Ado-cobalamin). Also synthesizes adenosylcobalamin 5'-phosphate from adenosylcobinamide-GDP and alpha-ribazole 5'-phosphate. The chain is Adenosylcobinamide-GDP ribazoletransferase from Shewanella amazonensis (strain ATCC BAA-1098 / SB2B).